The chain runs to 346 residues: Magnesium-protoporphyrin IX monomethyl ester [oxidative] cyclase (346 aa).

Belongs to the AcsF family. Requires Fe cation as cofactor.

The catalysed reaction is Mg-protoporphyrin IX 13-monomethyl ester + 3 NADPH + 3 O2 + 2 H(+) = 3,8-divinyl protochlorophyllide a + 3 NADP(+) + 5 H2O. It participates in porphyrin-containing compound metabolism; chlorophyll biosynthesis (light-independent). Catalyzes the formation of the isocyclic ring in chlorophyll biosynthesis. Mediates the cyclase reaction, which results in the formation of divinylprotochlorophyllide (Pchlide) characteristic of all chlorophylls from magnesium-protoporphyrin IX 13-monomethyl ester (MgPMME). This is Magnesium-protoporphyrin IX monomethyl ester [oxidative] cyclase from Gloeobacter violaceus (strain ATCC 29082 / PCC 7421).